A 209-amino-acid chain; its full sequence is MVQFITIPTPIDYQDSLMLMEDYVNKVIDGEAPEAVYLVEHLDVYTAGTNYKQEELLNHNNIPVIYTGRGGKFTFHGAGQRVIYPILNLALPNRTKDLKLYVRMLEEWIINSLDIFGIKAYIIKNKVGIWVKTNDDIPSKIAAIGVRVRKWVTYHGIAINISTDLSKFNGIIPCGLENSLVTSLNQLGVYIEMTEFDKILEVEFIKIFK.

The region spanning 30–209 is the BPL/LPL catalytic domain; sequence GEAPEAVYLV…LEVEFIKIFK (180 aa). Substrate contacts are provided by residues 69–76, 143–145, and 156–158; these read RGGKFTFH, AIG, and GIA. C174 serves as the catalytic Acyl-thioester intermediate.

Belongs to the LipB family.

Its subcellular location is the cytoplasm. The enzyme catalyses octanoyl-[ACP] + L-lysyl-[protein] = N(6)-octanoyl-L-lysyl-[protein] + holo-[ACP] + H(+). It participates in protein modification; protein lipoylation via endogenous pathway; protein N(6)-(lipoyl)lysine from octanoyl-[acyl-carrier-protein]: step 1/2. Catalyzes the transfer of endogenously produced octanoic acid from octanoyl-acyl-carrier-protein onto the lipoyl domains of lipoate-dependent enzymes. Lipoyl-ACP can also act as a substrate although octanoyl-ACP is likely to be the physiological substrate. The sequence is that of Octanoyltransferase from Rickettsia bellii (strain OSU 85-389).